The sequence spans 174 residues: Photosystem I assembly protein Ycf4 (174 aa).

2 helical membrane-spanning segments follow: residues 11–31 (LSNI…FLNG) and 56–76 (IILM…CLTI).

Belongs to the Ycf4 family.

The protein localises to the plastid. The protein resides in the chloroplast thylakoid membrane. Its function is as follows. Seems to be required for the assembly of the photosystem I complex. This Emiliania huxleyi (Coccolithophore) protein is Photosystem I assembly protein Ycf4.